The primary structure comprises 132 residues: Large ribosomal subunit protein bL17 (132 aa).

It belongs to the bacterial ribosomal protein bL17 family. As to quaternary structure, part of the 50S ribosomal subunit. Contacts protein L32.

The polypeptide is Large ribosomal subunit protein bL17 (Polaromonas sp. (strain JS666 / ATCC BAA-500)).